The chain runs to 3305 residues: Apolipophorins (3305 aa).

The first 23 residues, 1–23 (MGKSNRLLSVLFVISVLWKAAYG), serve as a signal peptide directing secretion. The region spanning 39–640 (FAAGQKYNYG…SQTSFLPRSV (602 aa)) is the Vitellogenin domain. Residues asparagine 643 and asparagine 2769 are each glycosylated (N-linked (GlcNAc...) asparagine). Positions 2733–2899 (LRAVVVNGQH…NSYRLSRSCP (167 aa)) constitute a VWFD domain. Cysteine 2757 and cysteine 2898 are oxidised to a cystine.

Cleaved into 2 chains by furin protease. However, prevention of cleavage does not impair its function. In terms of processing, N-glycosylated.

The protein localises to the secreted. Functionally, constitutes the major component of lipophorin, which mediates transport for various types of lipids in hemolymph. Acts by forming lipoprotein particles that bind lipoproteins and lipids. May be required for morphogens wingless (wg) and hedgehog (hh) function, possibly by acting as vehicles for the movement of wg and hh. The chain is Apolipophorins from Manduca sexta (Tobacco hawkmoth).